Consider the following 33-residue polypeptide: Dermaseptin DS VIII-like peptide (33 aa).

Position 33 is an alanine amide (alanine 33).

As to expression, expressed by the parotoid glands.

Its subcellular location is the secreted. Possesses a potent antimicrobial activity against bacteria, fungi and protozoa. Probably acts by disturbing membrane functions with its amphipathic structure. This is Dermaseptin DS VIII-like peptide from Phyllomedusa burmeisteri (Brazilian common walking leaf frog).